A 71-amino-acid polypeptide reads, in one-letter code: Ubiquinol-cytochrome c reductase complex assembly factor 6 (71 aa).

Over 1–8 (MPAGVPMS) the chain is Mitochondrial matrix. The helical; Signal-anchor for type II membrane protein transmembrane segment at 9–25 (TYLKMLAASLLAMCAGA) threads the bilayer. Over 26–71 (EVVHRYYRPDLTIPEIPPKRGELKTELLGLKERKHKPQISQQEELK) the chain is Mitochondrial intermembrane. The interval 52–71 (LLGLKERKHKPQISQQEELK) is disordered.

Belongs to the UQCC6 family. In terms of assembly, interacts with UQCRC1. Interacts with UQCRQ. Interacts with UQCC5. Forms a complex, named COMB/coordinator of mitochondrial CYTB biogenesis, composed of UQCC1, UQCC2, UQCC4, UQCC5 and UQCC6; stabilizes nascent cytochrome b/MT-CYB and promotes its membrane insertion. Forms a complex, named COMA, composed of UQCC1, UQCC2 and UQCC4; activates MT-CYB translation. Forms a complex, named COMC, composed of UQCC1, UQCC2; UQCC3 and UQCC4; mediates MT-CYB hemylation and association with the first nuclear-encoded complex III subunit UQCRQ. Interacts with MT-CYB.

It is found in the mitochondrion inner membrane. Its function is as follows. Required for the assembly and stability of the mitochondrial ubiquinol-cytochrome c reductase complex (complex III (CIII) or cytochrome b-c1 complex), a multisubunit transmembrane complex that is part of the mitochondrial electron transport chain (ETC) which drives oxidative phosphorylation. Mediates early complex III biogenesis. Participates in regulating the levels of electron transport chain proteins, and therefore energy supply, in response to changes in energy demand. Also required for cytochrome c oxidase complex (complex IV) assembly. The protein is Ubiquinol-cytochrome c reductase complex assembly factor 6 of Pongo abelii (Sumatran orangutan).